Here is a 228-residue protein sequence, read N- to C-terminus: Phosphoribosylformylglycinamidine synthase subunit PurQ (228 aa).

The region spanning 3 to 226 is the Glutamine amidotransferase type-1 domain; it reads FAVIVFPGSN…VNYWRETHVV (224 aa). Cys86 serves as the catalytic Nucleophile. Catalysis depends on residues His195 and Glu197.

In terms of assembly, part of the FGAM synthase complex composed of 1 PurL, 1 PurQ and 2 PurS subunits.

It localises to the cytoplasm. The catalysed reaction is N(2)-formyl-N(1)-(5-phospho-beta-D-ribosyl)glycinamide + L-glutamine + ATP + H2O = 2-formamido-N(1)-(5-O-phospho-beta-D-ribosyl)acetamidine + L-glutamate + ADP + phosphate + H(+). The enzyme catalyses L-glutamine + H2O = L-glutamate + NH4(+). It functions in the pathway purine metabolism; IMP biosynthesis via de novo pathway; 5-amino-1-(5-phospho-D-ribosyl)imidazole from N(2)-formyl-N(1)-(5-phospho-D-ribosyl)glycinamide: step 1/2. Its function is as follows. Part of the phosphoribosylformylglycinamidine synthase complex involved in the purines biosynthetic pathway. Catalyzes the ATP-dependent conversion of formylglycinamide ribonucleotide (FGAR) and glutamine to yield formylglycinamidine ribonucleotide (FGAM) and glutamate. The FGAM synthase complex is composed of three subunits. PurQ produces an ammonia molecule by converting glutamine to glutamate. PurL transfers the ammonia molecule to FGAR to form FGAM in an ATP-dependent manner. PurS interacts with PurQ and PurL and is thought to assist in the transfer of the ammonia molecule from PurQ to PurL. The chain is Phosphoribosylformylglycinamidine synthase subunit PurQ from Geobacillus thermodenitrificans (strain NG80-2).